A 393-amino-acid polypeptide reads, in one-letter code: RNA pseudouridine synthase 7 (393 aa).

In terms of domain architecture, S4 RNA-binding spans 49–118 (KTIVDLFTDE…GDITILQNEA (70 aa)). The active site involves Asp162.

The protein belongs to the pseudouridine synthase RluA family.

The catalysed reaction is a uridine in RNA = a pseudouridine in RNA. The sequence is that of RNA pseudouridine synthase 7 from Oryza sativa subsp. japonica (Rice).